A 317-amino-acid chain; its full sequence is Cold tolerance protein 1 (317 aa).

The protein belongs to the CTO1 family.

In terms of biological role, protein required for cold tolerance. Plays a role in the regulation of phosphate uptake. In Saccharomyces cerevisiae (strain ATCC 204508 / S288c) (Baker's yeast), this protein is Cold tolerance protein 1.